The following is a 436-amino-acid chain: 3-ketoacyl-CoA thiolase (436 aa).

Cys99 (acyl-thioester intermediate) is an active-site residue. Active-site proton acceptor residues include His392 and Cys422.

Belongs to the thiolase-like superfamily. Thiolase family. As to quaternary structure, heterotetramer of two alpha chains (FadJ) and two beta chains (FadI).

It localises to the cytoplasm. The catalysed reaction is an acyl-CoA + acetyl-CoA = a 3-oxoacyl-CoA + CoA. The protein operates within lipid metabolism; fatty acid beta-oxidation. In terms of biological role, catalyzes the final step of fatty acid oxidation in which acetyl-CoA is released and the CoA ester of a fatty acid two carbons shorter is formed. This chain is 3-ketoacyl-CoA thiolase, found in Photorhabdus laumondii subsp. laumondii (strain DSM 15139 / CIP 105565 / TT01) (Photorhabdus luminescens subsp. laumondii).